The chain runs to 152 residues: UPF0178 protein SAS0646 (152 aa).

Belongs to the UPF0178 family.

The sequence is that of UPF0178 protein SAS0646 from Staphylococcus aureus (strain MSSA476).